Here is an 894-residue protein sequence, read N- to C-terminus: Kinesin-like protein KIN-UB (894 aa).

Residues 1-53 (MAMASSRNGAVRGSMRPVSGANSSNLRSSSFKSRIPSSAPAPRRSSSASIGAA) are disordered. The segment covering 19 to 50 (SGANSSNLRSSSFKSRIPSSAPAPRRSSSASI) has biased composition (low complexity). The Kinesin motor domain maps to 60–402 (RVRVAVRLRP…ILFGQRAMKV (343 aa)). 145–152 (GQTGTGKT) is an ATP binding site. The short motif at 372-380 (RTSLIVTIG) is the D-BOX element. A coiled-coil region spans residues 423 to 588 (VQLDKVIAEN…RSQLVQLTFE (166 aa)). Disordered stretches follow at residues 530 to 550 (EEEVSKVKSQSTLKTRSGEGE) and 598 to 623 (RGAPGNSYSGTDSLPSRHSQARESVN). A compositionally biased stretch (polar residues) spans 603 to 623 (NSYSGTDSLPSRHSQARESVN). ARM repeat units lie at residues 626–665 (KAPFATLCEQVGLQKILQLLESDDANIRIHAVKVVANLAA), 667–707 (EANQ…NLAM), 709–749 (EVSQ…NLCG), and 751–790 (DKLQARLWSDGGIKALLGMVRCGHPDVLAQVARGIANFAK).

The protein belongs to the TRAFAC class myosin-kinesin ATPase superfamily. Kinesin family. Ungrouped subfamily. In terms of assembly, interacts (via C-terminus) with NEK5. As to expression, expressed in the basal regions and petioles of immature leaves and in the root elongation zone.

Its subcellular location is the cytoplasm. The protein localises to the cytoskeleton. Its function is as follows. Involved in the control of epidermal-cell morphogenesis in roots and helical growth of roots by promoting microtubule depolymerization and limiting the accumulation of endoplasmic microtubules. Seems to be involved in the control of cell-file rotation (or twisting). In Arabidopsis thaliana (Mouse-ear cress), this protein is Kinesin-like protein KIN-UB.